A 313-amino-acid chain; its full sequence is 3-ketodihydrosphingosine reductase TSC10 (313 aa).

Position 12 (leucine 12) interacts with NADP(+). Glycine 15, serine 17, and glycine 19 together coordinate NADPH. A GXSXG motif is present at residues 15–19 (GGSQG). Leucine 20 provides a ligand contact to NADP(+). Residues arginine 47, lysine 51, and aspartate 86 each coordinate NADPH. Position 86 (aspartate 86) interacts with NADP(+). Residue serine 160 is the Proton donor of the active site. Positions 174, 178, and 207 each coordinate NADP(+). Tyrosine 174 (proton acceptor) is an active-site residue. Lysine 178 serves as the catalytic Lowers pKa of active site Tyr. A helical membrane pass occupies residues 278-298 (VFSWILGALLNITIVPIYMLI).

This sequence belongs to the short-chain dehydrogenases/reductases (SDR) family.

It localises to the endoplasmic reticulum membrane. The enzyme catalyses sphinganine + NADP(+) = 3-oxosphinganine + NADPH + H(+). It participates in lipid metabolism; sphingolipid metabolism. Functionally, catalyzes the reduction of 3'-oxosphinganine (3-ketodihydrosphingosine/KDS) to sphinganine (dihydrosphingosine/DHS), the second step of de novo sphingolipid biosynthesis. This Kluyveromyces lactis (strain ATCC 8585 / CBS 2359 / DSM 70799 / NBRC 1267 / NRRL Y-1140 / WM37) (Yeast) protein is 3-ketodihydrosphingosine reductase TSC10 (TSC10).